Reading from the N-terminus, the 555-residue chain is Transmembrane protein 87A (555 aa).

Residues 1–21 (MAVAAWLQVSPVIFLLLGAQP) form the signal peptide. The Lumenal segment spans residues 22–225 (FPLSFLGAGP…YEYLTLEDYP (204 aa)). 2 cysteine pairs are disulfide-bonded: Cys74-Cys128 and Cys89-Cys431. N-linked (GlcNAc...) asparagine glycosylation is found at Asn79, Asn157, and Asn160. Residues 226–246 (LMIFFMVMCIVYVLFGVLWLA) traverse the membrane as a helical segment. Topologically, residues 247-257 (WSACYWRDLLR) are cytoplasmic. A helical membrane pass occupies residues 258–278 (IQFWIGAVIFLGMFEKAVFYA). Topologically, residues 279-305 (EFQNIRYKGESVQNALVLAELLSAVKR) are lumenal. The chain crosses the membrane as a helical span at residues 306–322 (SLARTLVIIVSLGYGIV). Residues 323–325 (KPR) lie on the Cytoplasmic side of the membrane. A helical membrane pass occupies residues 326-346 (LGVTLHKVVVAGALYLLFSGM). The Lumenal segment spans residues 347 to 361 (EGVLRVTGAQTDLAS). A helical membrane pass occupies residues 362 to 382 (LAFIPLAFLDTALCWWIFISL). Topologically, residues 383–403 (TQTMKLLKLRRNIVKLSLYRH) are cytoplasmic. Residues 404-424 (FTNTLILAVAASIVFIIWTTM) form a helical membrane-spanning segment. At 425–437 (KFRIVTCQSDWRE) the chain is on the lumenal side. The chain crosses the membrane as a helical span at residues 438–458 (LWVDDAIWRLLFSMILFVIMI). At 459–555 (LWRPSANNQR…ITHFERSKME (97 aa)) the chain is on the cytoplasmic side. The interval 491 to 515 (SFEGMKMRSTKQEPNGTSKVNKAQE) is disordered. A compositionally biased stretch (polar residues) spans 502–511 (QEPNGTSKVN). Ser540 is modified (phosphoserine).

It belongs to the LU7TM family. TMEM87 subfamily. As to quaternary structure, may interact with STOML3; STOML3 potentiates the mechanosensitive ion channel activity associated with TMEM87A. Highly expressed in sensory neurons responsive to mechanical force.

It is found in the cell membrane. Its subcellular location is the golgi apparatus membrane. It localises to the cell projection. The protein resides in the ruffle. In terms of biological role, potential monoatomic ion channel gated by mechanical force, implicated in normal touch sensitivity through the generation of mechanically activated currents. However, a direct channel activity is debated and an alternative could be that it functions as a chaperone for an unidentified mechanosensitive ion channel. Could also be involved in cell mechanosensitivity regulating cell adhesion and migration. May also be involved in retrograde transport from endosomes to the trans-Golgi network (TGN). In Mus musculus (Mouse), this protein is Transmembrane protein 87A.